A 1372-amino-acid chain; its full sequence is DNA-directed RNA polymerase subunit beta' (1372 aa).

Zn(2+) contacts are provided by C69, C71, C84, and C87. Mg(2+) contacts are provided by D460, D462, and D464. The Zn(2+) site is built by C808, C882, C889, and C892.

It belongs to the RNA polymerase beta' chain family. In terms of assembly, the RNAP catalytic core consists of 2 alpha, 1 beta, 1 beta' and 1 omega subunit. When a sigma factor is associated with the core the holoenzyme is formed, which can initiate transcription. It depends on Mg(2+) as a cofactor. Requires Zn(2+) as cofactor.

The enzyme catalyses RNA(n) + a ribonucleoside 5'-triphosphate = RNA(n+1) + diphosphate. Its function is as follows. DNA-dependent RNA polymerase catalyzes the transcription of DNA into RNA using the four ribonucleoside triphosphates as substrates. In Rickettsia conorii (strain ATCC VR-613 / Malish 7), this protein is DNA-directed RNA polymerase subunit beta'.